A 151-amino-acid polypeptide reads, in one-letter code: Myosin light polypeptide 6 (151 aa).

Cys-2 is subject to N-acetylcysteine. The region spanning 7–42 (DQTAEFKEAFQLFDRTGDGKILYSQCGDVMRALGQN) is the EF-hand 1 domain. Phosphoserine is present on Ser-57. Residue Lys-81 is modified to N6-acetyllysine. EF-hand domains follow at residues 84-119 (GTYEDYVEGLRVFDKEGNGTVMGAEIRHVLVTLGEK) and 119-151 (KMTEEEVEMLVAGHEDSNGCINYEELLRMVLNG).

In terms of assembly, myosin is a hexamer of 2 heavy chains and 4 light chains. Interacts with SPATA6.

Its function is as follows. Regulatory light chain of myosin. Does not bind calcium. In Rattus norvegicus (Rat), this protein is Myosin light polypeptide 6 (Myl6).